Consider the following 298-residue polypeptide: (S)-ureidoglycine aminohydrolase (298 aa).

Residues 1-20 (MRSLYLIVFIVISLVKASKS) form the signal peptide. The region spanning 222 to 288 (TMDFQPGEFL…ALGKTRSRYL (67 aa)) is the Cupin type-2 domain. Mn(2+) contacts are provided by E235, H237, H241, and Q275. E235 is a binding site for substrate. Q275, Y287, and K291 together coordinate substrate.

The protein belongs to the UGHY family. As to quaternary structure, homooctamer. It depends on Mn(2+) as a cofactor.

It localises to the endoplasmic reticulum. It catalyses the reaction (S)-2-ureidoglycine + H2O = (S)-ureidoglycolate + NH4(+). Functionally, involved in the catabolism of purine nucleotides. Can use (S)-2-ureidoglycine as substrate, but not allantoate. The sequential activity of AAH, UGLYAH and UAH allows a complete purine breakdown without the intermediate generation of urea. This is (S)-ureidoglycine aminohydrolase (UGLYAH) from Arabidopsis thaliana (Mouse-ear cress).